A 356-amino-acid chain; its full sequence is MGLLRIMMPPKLQLLAVVAFAVAMLFLENQIQKLEESRAKLERAIARHEVREIEQRHTMDGPRQDAAVDEEEDIVIIYNRVPKTASTSFTNIAYDLCAKNRYHVLHINTTKNNPVMSLQDQVRFVKNITTWNEMKPGFYHGHISYLDFAKFGVKKKPIYINVIRDPIERLVSYYYFLRFGDDYRPGLRRRKQGDKKTFDECVAEGGSDCAPEKLWLQIPFFCGHSSECWNVGSRWAMDQAKYNLINEYFLVGVTEELEDFIMLLEAALPRFFRGATDLYRTGKKSHLRKTTEKKLPTKQTIAKLQQSDIWKMENEFYEFALEQFQFIRAHAVREKDGDLYILAQNFFYEKIYPKSN.

Residues 1–11 (MGLLRIMMPPK) lie on the Cytoplasmic side of the membrane. The chain crosses the membrane as a helical; Signal-anchor for type II membrane protein span at residues 12-28 (LQLLAVVAFAVAMLFLE). Residues 24-51 (MLFLENQIQKLEESRAKLERAIARHEVR) adopt a coiled-coil conformation. Residues 29–356 (NQIQKLEESR…FYEKIYPKSN (328 aa)) lie on the Lumenal side of the membrane. Positions 83, 84, 85, 86, 87, and 88 each coordinate adenosine 3',5'-bisphosphate. N-linked (GlcNAc...) asparagine glycans are attached at residues N108 and N127. Active-site residues include H140 and H142. R164 and S172 together coordinate adenosine 3',5'-bisphosphate. 2 cysteine pairs are disulfide-bonded: C201-C209 and C222-C228. The adenosine 3',5'-bisphosphate site is built by Y279, S285, T290, and K293.

This sequence belongs to the sulfotransferase 3 family. In terms of assembly, homotrimer. Interacts with the C5-epimerase GLCE. N-glycosylated.

The protein localises to the golgi apparatus membrane. Catalyzes the transfer of a sulfo group from 3'-phospho-5'-adenylyl sulfate (PAPS) to the 2-OH position of iduronic acid (IdoA) or glucuronic acid (GlcA) within the heparan sulfate (HS) chain and participates in HS biosynthesis. Required for metanephric development of kidney formation, suggesting that 2-O-sulfation within HS is essential for signaling between ureteric bud and metanephric mesenchyme. The chain is Heparan sulfate 2-O-sulfotransferase 1 from Cricetulus griseus (Chinese hamster).